The primary structure comprises 224 residues: uncharacterized protein (224 aa).

This is an uncharacterized protein from Acanthamoeba polyphaga mimivirus (APMV).